Consider the following 71-residue polypeptide: Small ribosomal subunit protein bS21 (71 aa).

Belongs to the bacterial ribosomal protein bS21 family.

The chain is Small ribosomal subunit protein bS21 from Shewanella amazonensis (strain ATCC BAA-1098 / SB2B).